Here is a 338-residue protein sequence, read N- to C-terminus: Ketol-acid reductoisomerase (NADP(+)) (338 aa).

The 181-residue stretch at 1 to 181 (MKVYYDKDAD…GGTKGGVIET (181 aa)) folds into the KARI N-terminal Rossmann domain. Residues 24–27 (YGSQ), Arg-47, Ser-52, and 82–85 (DESQ) each bind NADP(+). The active site involves His-107. Gly-133 is a binding site for NADP(+). Residues 182–327 (NFREETETDL…AELRAMMPWI (146 aa)) enclose the KARI C-terminal knotted domain. Asp-190, Glu-194, Glu-226, and Glu-230 together coordinate Mg(2+). Substrate is bound at residue Ser-251.

Belongs to the ketol-acid reductoisomerase family. The cofactor is Mg(2+).

The enzyme catalyses (2R)-2,3-dihydroxy-3-methylbutanoate + NADP(+) = (2S)-2-acetolactate + NADPH + H(+). The catalysed reaction is (2R,3R)-2,3-dihydroxy-3-methylpentanoate + NADP(+) = (S)-2-ethyl-2-hydroxy-3-oxobutanoate + NADPH + H(+). It participates in amino-acid biosynthesis; L-isoleucine biosynthesis; L-isoleucine from 2-oxobutanoate: step 2/4. Its pathway is amino-acid biosynthesis; L-valine biosynthesis; L-valine from pyruvate: step 2/4. Its function is as follows. Involved in the biosynthesis of branched-chain amino acids (BCAA). Catalyzes an alkyl-migration followed by a ketol-acid reduction of (S)-2-acetolactate (S2AL) to yield (R)-2,3-dihydroxy-isovalerate. In the isomerase reaction, S2AL is rearranged via a Mg-dependent methyl migration to produce 3-hydroxy-3-methyl-2-ketobutyrate (HMKB). In the reductase reaction, this 2-ketoacid undergoes a metal-dependent reduction by NADPH to yield (R)-2,3-dihydroxy-isovalerate. This Chromobacterium violaceum (strain ATCC 12472 / DSM 30191 / JCM 1249 / CCUG 213 / NBRC 12614 / NCIMB 9131 / NCTC 9757 / MK) protein is Ketol-acid reductoisomerase (NADP(+)).